The following is a 465-amino-acid chain: Chromosomal replication initiator protein DnaA (465 aa).

The segment at 1–85 (MSGFWESCLQ…IALVIGSGKA (85 aa)) is domain I, interacts with DnaA modulators. The interval 85–129 (ATAARIQATTTDSGQNAPANPATTSEKRTAASEKARGKGSNYEKS) is domain II. The span at 93–108 (TTTDSGQNAPANPATT) shows a compositional bias: polar residues. The interval 93–125 (TTTDSGQNAPANPATTSEKRTAASEKARGKGSN) is disordered. The span at 109 to 125 (SEKRTAASEKARGKGSN) shows a compositional bias: basic and acidic residues. Residues 130 to 346 (RLFPSFTFDN…GALKKVLAYS (217 aa)) are domain III, AAA+ region. ATP-binding residues include Gly-174, Gly-176, Lys-177, and Thr-178. Residues 347 to 465 (SFHGRVIALD…LHVLLQVLKG (119 aa)) form a domain IV, binds dsDNA region.

This sequence belongs to the DnaA family. In terms of assembly, oligomerizes as a right-handed, spiral filament on DNA at oriC.

It localises to the cytoplasm. Plays an essential role in the initiation and regulation of chromosomal replication. ATP-DnaA binds to the origin of replication (oriC) to initiate formation of the DNA replication initiation complex once per cell cycle. Binds the DnaA box (a 9 base pair repeat at the origin) and separates the double-stranded (ds)DNA. Forms a right-handed helical filament on oriC DNA; dsDNA binds to the exterior of the filament while single-stranded (ss)DNA is stabiized in the filament's interior. The ATP-DnaA-oriC complex binds and stabilizes one strand of the AT-rich DNA unwinding element (DUE), permitting loading of DNA polymerase. After initiation quickly degrades to an ADP-DnaA complex that is not apt for DNA replication. Binds acidic phospholipids. This Dechloromonas aromatica (strain RCB) protein is Chromosomal replication initiator protein DnaA.